A 145-amino-acid polypeptide reads, in one-letter code: D-aminoacyl-tRNA deacylase (145 aa).

The Gly-cisPro motif, important for rejection of L-amino acids signature appears at 137-138 (GP).

It belongs to the DTD family. As to quaternary structure, homodimer.

It is found in the cytoplasm. The catalysed reaction is glycyl-tRNA(Ala) + H2O = tRNA(Ala) + glycine + H(+). It catalyses the reaction a D-aminoacyl-tRNA + H2O = a tRNA + a D-alpha-amino acid + H(+). An aminoacyl-tRNA editing enzyme that deacylates mischarged D-aminoacyl-tRNAs. Also deacylates mischarged glycyl-tRNA(Ala), protecting cells against glycine mischarging by AlaRS. Acts via tRNA-based rather than protein-based catalysis; rejects L-amino acids rather than detecting D-amino acids in the active site. By recycling D-aminoacyl-tRNA to D-amino acids and free tRNA molecules, this enzyme counteracts the toxicity associated with the formation of D-aminoacyl-tRNA entities in vivo and helps enforce protein L-homochirality. This is D-aminoacyl-tRNA deacylase from Shewanella loihica (strain ATCC BAA-1088 / PV-4).